Here is a 360-residue protein sequence, read N- to C-terminus: 1-deoxy-D-xylulose 5-phosphate reductoisomerase (360 aa).

5 residues coordinate NADPH: S7, G8, S9, I10, and N115. Residue K116 coordinates 1-deoxy-D-xylulose 5-phosphate. An NADPH-binding site is contributed by E117. D135 lines the Mn(2+) pocket. 1-deoxy-D-xylulose 5-phosphate-binding residues include S136, E137, S159, and H182. E137 lines the Mn(2+) pocket. G188 provides a ligand contact to NADPH. Residues S195, N200, K201, and E204 each coordinate 1-deoxy-D-xylulose 5-phosphate. Mn(2+) is bound at residue E204.

This sequence belongs to the DXR family. Requires Mg(2+) as cofactor. Mn(2+) is required as a cofactor.

The enzyme catalyses 2-C-methyl-D-erythritol 4-phosphate + NADP(+) = 1-deoxy-D-xylulose 5-phosphate + NADPH + H(+). Its pathway is isoprenoid biosynthesis; isopentenyl diphosphate biosynthesis via DXP pathway; isopentenyl diphosphate from 1-deoxy-D-xylulose 5-phosphate: step 1/6. Catalyzes the NADPH-dependent rearrangement and reduction of 1-deoxy-D-xylulose-5-phosphate (DXP) to 2-C-methyl-D-erythritol 4-phosphate (MEP). The sequence is that of 1-deoxy-D-xylulose 5-phosphate reductoisomerase from Campylobacter fetus subsp. fetus (strain 82-40).